We begin with the raw amino-acid sequence, 547 residues long: MTAKDVKFGNDARVKMLAGVNVLADAVKVTLGPKGRNVILDKAFGAPTITKDGVSVAREIELEDKFENMGAQMVKEVASKANDAAGDGTTTATVLAQAIVSEGLKAVAAGMNPMDLKRGIDKAVNAVVEELKILSKPCETSKEIEQVGTISANADETVGKLIAQAMEKVGKEGVITVEDGSGLSDELDVVEGMQFDRGYLSPYFINKPEAATVELDNPFILLVDKKISNIRELLPVLEGVAKAGKPLLIIAEDVEGEALATLVVNTMRGIVKVAAVKAPGFGDRRKAMLQDIAILTAGTVISEEIGMELEKATLEDLGQAKRVVINKDNTTIIDGIGDEAQIKGRVAQIRQQIEEATSDYDKEKLQERVAKLAGGVAVIKVGAATEVEMKEKKDRVDDALHATRAAVEEGIVAGGGVALIRAATKVATTLKGDNEDQDVGIKLALRAMEAPLRQIVTNAGEEASVVASAVKNGEGNFGYNAGTEQYGDMIAMGILDPTKVTRSALQFAASIAGLMVTTECMVADLPKEEKADLTGGMGGMGGMGGMM.

Residues 30–33 (TLGP), Lys51, 87–91 (DGTTT), Gly415, and Asp496 each bind ATP.

It belongs to the chaperonin (HSP60) family. Forms a cylinder of 14 subunits composed of two heptameric rings stacked back-to-back. Interacts with the co-chaperonin GroES.

It localises to the cytoplasm. It catalyses the reaction ATP + H2O + a folded polypeptide = ADP + phosphate + an unfolded polypeptide.. Its function is as follows. Together with its co-chaperonin GroES, plays an essential role in assisting protein folding. The GroEL-GroES system forms a nano-cage that allows encapsulation of the non-native substrate proteins and provides a physical environment optimized to promote and accelerate protein folding. The protein is Chaperonin GroEL of Histophilus somni (strain 129Pt) (Haemophilus somnus).